Consider the following 296-residue polypeptide: Low affinity immunoglobulin gamma Fc region receptor II (296 aa).

The first 42 residues, 1 to 42 (MGIPSFLAFPAARRNRAHCTPWHPWGHMLLWTALLFLAPVSG), serve as a signal peptide directing secretion. The Extracellular portion of the chain corresponds to 43–225 (KPDLPKAVVT…SSSSGPSSMT (183 aa)). Ig-like C2-type domains follow at residues 47–129 (PKAV…DVIS) and 130–212 (DWLL…VNIT). 2 disulfide bridges follow: Cys70–Cys112 and Cys151–Cys195. Asn79, Asn86, Asn105, Asn179, Asn186, and Asn210 each carry an N-linked (GlcNAc...) asparagine glycan. A helical membrane pass occupies residues 226–246 (AVAIGTCFAAVAIVAAIITWF). Topologically, residues 247-296 (RLRRKPISAGLTDAENDAARTEAENTVTYSLLSHPDVAEEDSESDYQKRL) are cytoplasmic. An ITIM motif motif is present at residues 273-278 (VTYSLL). Tyr275 is modified (phosphotyrosine; by SRC-type Tyr-kinases). At Ser288 the chain carries Phosphoserine. Tyr292 carries the phosphotyrosine modification.

As to quaternary structure, interacts with FGR and LYN. In terms of processing, phosphorylated by SRC-type Tyr-kinases such as LYN, BLK, FYN and SYK. Higher expression is found in macrophages than in neutrophils.

It localises to the cell membrane. Its function is as follows. Binds to the Fc region of immunoglobulins gamma. Low affinity receptor. The polypeptide is Low affinity immunoglobulin gamma Fc region receptor II (FCGR2) (Bos taurus (Bovine)).